A 538-amino-acid polypeptide reads, in one-letter code: Dihomomethionine N-hydroxylase (538 aa).

A helical membrane pass occupies residues 8–28; the sequence is LPYPFHILLVFILSMASITLL.

This sequence belongs to the cytochrome P450 family. Heme serves as cofactor. In terms of tissue distribution, highly expressed in cotyledons, leaves, stems and siliques. Detected in flowers and lateral roots, but not in the main root. Expressed only in the vascular bundles in apical plant parts.

The protein localises to the endoplasmic reticulum membrane. The catalysed reaction is an L-polyhomomethionine + 2 reduced [NADPH--hemoprotein reductase] + 2 O2 = an (E)-omega-(methylsulfanyl)-alkanal oxime + 2 oxidized [NADPH--hemoprotein reductase] + CO2 + 3 H2O + 2 H(+). It carries out the reaction L-dihomomethionine + 2 reduced [NADPH--hemoprotein reductase] + 2 O2 = (E)-5-(methylsulfanyl)pentanal oxime + 2 oxidized [NADPH--hemoprotein reductase] + CO2 + 3 H2O + 2 H(+). It catalyses the reaction L-trihomomethionine + 2 reduced [NADPH--hemoprotein reductase] + 2 O2 = (E)-6-(methylsulfanyl)hexanal oxime + 2 oxidized [NADPH--hemoprotein reductase] + CO2 + 3 H2O + 2 H(+). Functionally, catalyzes the conversion of the short chain elongated methionines di-, tri-, and tetrahomomethionine to their respective aldoximes 5-methylthiopentanaldoxime, 6-methylthiohexanaldoxime, and 7-methylheptanaldoxime. This chain is Dihomomethionine N-hydroxylase (CYP79F1), found in Arabidopsis thaliana (Mouse-ear cress).